We begin with the raw amino-acid sequence, 506 residues long: Tubby protein homolog (506 aa).

The segment at 36-244 (QKQKKKRQEP…PSPTAPEQPV (209 aa)) is disordered. Low complexity-rich tracts occupy residues 70-87 (LVES…QVQE) and 101-116 (PTAP…AATA). Over residues 196 to 206 (FDEDEEDEEEN) the composition is skewed to acidic residues. Composition is skewed to low complexity over residues 207-221 (SSSS…RPSS) and 230-243 (EAAS…PEQP).

The protein belongs to the TUB family. In terms of assembly, interacts with GNAQ. Interacts with TULP1.

It localises to the cytoplasm. It is found in the nucleus. The protein localises to the secreted. Its subcellular location is the cell membrane. Functionally, functions in signal transduction from heterotrimeric G protein-coupled receptors. Binds to membranes containing phosphatidylinositol 4,5-bisphosphate. Can bind DNA (in vitro). May contribute to the regulation of transcription in the nucleus. Could be involved in the hypothalamic regulation of body weight. Contribute to stimulation of phagocytosis of apoptotic retinal pigment epithelium (RPE) cells and macrophages. This chain is Tubby protein homolog (TUB), found in Homo sapiens (Human).